We begin with the raw amino-acid sequence, 413 residues long: Protein esc1 (413 aa).

Polar residues predominate over residues 1-22; it reads MSSYALPSMQPTPTSSIPLRQM. Disordered regions lie at residues 1–202 and 230–265; these read MSSY…NQPS and MYVPQQQTSHSSGASYQNESANPPVQSPMQYSYSQG. A compositionally biased stretch (low complexity) spans 23 to 42; the sequence is SQPTTSAPSNSASSTPYSPQ. The segment covering 43 to 63 has biased composition (polar residues); the sequence is QVPLTHNSYPLSTPSSFQHGQ. Low complexity-rich tracts occupy residues 86 to 103 and 116 to 126; these read SAAPASSSPTSATLSTAA and SSSSYVYSVPP. The span at 127 to 136 shows a compositional bias: polar residues; sequence TNSTTSQASA. The span at 150–197 shows a compositional bias: low complexity; that stretch reads STTLTPSTTDSSSTDVSSSDSVSTSASSSNASNTVSVTSPASSSATPL. Positions 334–385 constitute a bHLH domain; sequence ELRTSHKLAERKRRKEIKELFDDLKDALPLDKSTKSSKWGLLTRAIQYIEQL.

As to quaternary structure, efficient DNA binding requires dimerization with another bHLH protein.

Its subcellular location is the nucleus. In terms of biological role, involved in the sexual differentiation process. Modulate the ability of the cell to differentiate in response to the nitrogen starvation signal; in particular in response to decreases in the level of cellular cAMP. The protein is Protein esc1 (esc1) of Schizosaccharomyces pombe (strain 972 / ATCC 24843) (Fission yeast).